Consider the following 151-residue polypeptide: uncharacterized protein (151 aa).

The N-terminal stretch at 1 to 24 is a signal peptide; the sequence is MYYSIIIACLVLLLCLVIYVGHRA.

It belongs to the asfivirus EP152R family.

The protein resides in the virion. This is an uncharacterized protein from Ornithodoros (relapsing fever ticks).